A 282-amino-acid polypeptide reads, in one-letter code: 4-diphosphocytidyl-2-C-methyl-D-erythritol kinase (282 aa).

Lys11 is a catalytic residue. 93–103 (LVSAGLAGGSA) contacts ATP. The active site involves Asp133.

The protein belongs to the GHMP kinase family. IspE subfamily.

It carries out the reaction 4-CDP-2-C-methyl-D-erythritol + ATP = 4-CDP-2-C-methyl-D-erythritol 2-phosphate + ADP + H(+). It functions in the pathway isoprenoid biosynthesis; isopentenyl diphosphate biosynthesis via DXP pathway; isopentenyl diphosphate from 1-deoxy-D-xylulose 5-phosphate: step 3/6. Catalyzes the phosphorylation of the position 2 hydroxy group of 4-diphosphocytidyl-2C-methyl-D-erythritol. The protein is 4-diphosphocytidyl-2-C-methyl-D-erythritol kinase of Ehrlichia canis (strain Jake).